The sequence spans 2069 residues: Dedicator of cytokinesis protein 9 (2069 aa).

A phosphoserine mark is found at Ser-21, Ser-32, Ser-167, and Ser-170. The PH domain occupies 174 to 281 (GITKHGWLYK…WITILNKILQ (108 aa)). A disordered region spans residues 290–313 (EKRNGDSHEDDEQSKLEGSGSGLD). Phosphoserine occurs at positions 433 and 443. A C2 DOCK-type domain is found at 640–818 (TNHLYVYPKY…PLLKISTHLV (179 aa)). Phosphoserine is present on residues Ser-927 and Ser-1235. At Thr-1241 the chain carries Phosphothreonine. Residues 1241–1282 (TPNINSVRNADSRGSLISTDSGNSLPERNSEKSNSLDKHQQS) are disordered. Ser-1255, Ser-1261, and Ser-1264 each carry phosphoserine. The segment covering 1255–1267 (SLISTDSGNSLPE) has biased composition (polar residues). Basic and acidic residues predominate over residues 1268–1280 (RNSEKSNSLDKHQ). The 465-residue stretch at 1605–2069 (KSYASTPELR…LSEIMHEQLG (465 aa)) folds into the DOCKER domain. An interaction with CDC42 region spans residues 1693 to 2069 (DEEASMMEDV…LSEIMHEQLG (377 aa)). 2 coiled-coil regions span residues 1948–1982 (IEVA…KLQG) and 2034–2067 (NERL…MHEQ).

It belongs to the DOCK family. Homodimer. Interacts preferentially with nucleotide-depleted CDC42. Widely expressed, with highest expression in heart and placenta. Expressed at intermediate level in kidney, brain, lung and skeletal muscle.

It localises to the endomembrane system. Guanine nucleotide-exchange factor (GEF) that activates CDC42 by exchanging bound GDP for free GTP. Overexpression induces filopodia formation. The polypeptide is Dedicator of cytokinesis protein 9 (Homo sapiens (Human)).